Here is a 28-residue protein sequence, read N- to C-terminus: Dermaseptin-1 (28 aa).

Gln-28 bears the Glutamine amide mark.

As to expression, expressed by the skin glands.

It is found in the secreted. Functionally, has antimicrobial activity. The chain is Dermaseptin-1 from Phyllomedusa tomopterna (Tiger-striped leaf frog).